The sequence spans 427 residues: Putative F-box/FBD/LRR-repeat protein At4g13965 (427 aa).

Residues 13–61 enclose the F-box domain; the sequence is ADRISQLPEALIIQILSLLPTEVAVTTSVLSKQWQFLWKMLPKLNFDSL. 6 LRR repeats span residues 67-93, 98-122, 141-168, 169-194, 213-241, and 258-284; these read FKTF…HLIV, CNSM…VLEV, TLEL…HLHY, VDFK…VVHR, LTIY…KIVG, and SMIV…FLEF. The region spanning 346-396 is the FBD domain; sequence KWNKPKIVPECLLFHLETFMWKGYEWKRNDETEVAKYILSNTNRLKRATFF.

The protein is Putative F-box/FBD/LRR-repeat protein At4g13965 of Arabidopsis thaliana (Mouse-ear cress).